Reading from the N-terminus, the 443-residue chain is Maintenance of mitochondrial morphology protein 1 (443 aa).

The Lumenal segment spans residues 1–80 (MADLETSDLS…PSNTWSFTQG (80 aa)). Residues 81–101 (LIVGQLSVVFVIVIFIKFFVF) form a helical membrane-spanning segment. The Cytoplasmic portion of the chain corresponds to 102–443 (AESSPALAKS…NGDKVEDGSN (342 aa)). Disordered regions lie at residues 126–146 (KKDQ…TTAS) and 304–358 (LSAH…NDGT). The span at 131-142 (SSDDADPDDDSE) shows a compositional bias: acidic residues. In terms of domain architecture, SMP-LTD spans 165 to 417 (SPESLDWFNV…EPRFQVVRLP (253 aa)).

Belongs to the MMM1 family. Homodimer. Component of the ER-mitochondria encounter structure (ERMES) or MDM complex, composed of MMM1, MDM10, MDM12 and MDM34. An MMM1 homodimer associates with one molecule of MDM12 on each side in a pairwise head-to-tail manner, and the SMP-LTD domains of MMM1 and MDM12 generate a continuous hydrophobic tunnel for phospholipid trafficking.

The protein resides in the endoplasmic reticulum membrane. Component of the ERMES/MDM complex, which serves as a molecular tether to connect the endoplasmic reticulum (ER) and mitochondria. Components of this complex are involved in the control of mitochondrial shape and protein biogenesis, and function in nonvesicular lipid trafficking between the ER and mitochondria. The MDM12-MMM1 subcomplex functions in the major beta-barrel assembly pathway that is responsible for biogenesis of all outer membrane beta-barrel proteins, and acts in a late step after the SAM complex. The MDM10-MDM12-MMM1 subcomplex further acts in the TOM40-specific pathway after the action of the MDM12-MMM1 complex. Essential for establishing and maintaining the structure of mitochondria and maintenance of mtDNA nucleoids. The chain is Maintenance of mitochondrial morphology protein 1 from Scheffersomyces stipitis (strain ATCC 58785 / CBS 6054 / NBRC 10063 / NRRL Y-11545) (Yeast).